Reading from the N-terminus, the 60-residue chain is Metallothionein B (60 aa).

The beta stretch occupies residues 1–28 (MDPCECSKTGSCNCGGSCKCSNCACTSC). A divalent metal cation-binding residues include Cys4, Cys6, Cys12, Cys14, Cys18, Cys20, Cys23, Cys25, Cys28, Cys32, Cys33, Cys35, Cys36, Cys40, Cys43, Cys47, Cys49, Cys54, Cys58, and Cys59. An alpha region spans residues 29–60 (KKSCCPCCPSDCSKCASGCVCKGKTCDTSCCQ).

The protein belongs to the metallothionein superfamily. Type 1 family.

In terms of biological role, metallothioneins have a high content of cysteine residues that bind various heavy metals. This is Metallothionein B (mtb) from Oncorhynchus mykiss (Rainbow trout).